The primary structure comprises 942 residues: Protein inturned (942 aa).

Residues 1–13 (MADPARRDPRGRA) show a composition bias toward basic and acidic residues. 2 disordered regions span residues 1-54 (MADP…LEPE) and 129-150 (PKRHHKKKSSNTGPVSILKHQS). The span at 22-32 (SQEEEEEESDS) shows a compositional bias: acidic residues. Residues 33–48 (DAGASSLGSCSSASSD) show a composition bias toward low complexity. Residues 138-150 (SNTGPVSILKHQS) are compositionally biased toward polar residues. The PDZ domain maps to 189–267 (LVGVIHQTKW…PMQVKLTFEN (79 aa)). S674 and S678 each carry phosphoserine. Residues 707-752 (KARKPSPSRIGGGREPGEGEENVGLSPHTTPDTVRKQRESEGSDDN) are disordered.

It belongs to the inturned family. As to quaternary structure, component of the CPLANE (ciliogenesis and planar polarity effectors) complex, composed of INTU, FUZ and WDPCP. Interacts with CPLANE1. Interacts with NPHP4 and DAAM1; INTU is mediating the interaction between NPHP4 and DAAM1.

Its subcellular location is the cytoplasm. The protein localises to the cell surface. The protein resides in the cytoskeleton. It localises to the cilium basal body. It is found in the microtubule organizing center. Its subcellular location is the centrosome. The protein localises to the centriole. Plays a key role in ciliogenesis and embryonic development. Regulator of cilia formation by controlling the organization of the apical actin cytoskeleton and the positioning of the basal bodies at the apical cell surface, which in turn is essential for the normal orientation of elongating ciliary microtubules. Plays a key role in definition of cell polarity via its role in ciliogenesis but not via conversion extension. Has an indirect effect on hedgehog signaling. Proposed to function as core component of the CPLANE (ciliogenesis and planar polarity effectors) complex involved in the recruitment of peripheral IFT-A proteins to basal bodies. Required for recruitment of CPLANE2 to the mother centriole. Binds phosphatidylinositol 3-phosphate with highest affinity, followed by phosphatidylinositol 4-phosphate and phosphatidylinositol 5-phosphate. In Rattus norvegicus (Rat), this protein is Protein inturned (Intu).